Consider the following 159-residue polypeptide: Ribosomal RNA large subunit methyltransferase H (159 aa).

S-adenosyl-L-methionine contacts are provided by residues glycine 108 and 127 to 132 (FSKMTF).

It belongs to the RNA methyltransferase RlmH family. Homodimer.

It localises to the cytoplasm. It carries out the reaction pseudouridine(1915) in 23S rRNA + S-adenosyl-L-methionine = N(3)-methylpseudouridine(1915) in 23S rRNA + S-adenosyl-L-homocysteine + H(+). Its function is as follows. Specifically methylates the pseudouridine at position 1915 (m3Psi1915) in 23S rRNA. The sequence is that of Ribosomal RNA large subunit methyltransferase H from Clostridium beijerinckii (strain ATCC 51743 / NCIMB 8052) (Clostridium acetobutylicum).